The following is a 417-amino-acid chain: Serine hydroxymethyltransferase (417 aa).

(6S)-5,6,7,8-tetrahydrofolate contacts are provided by residues Leu121 and 125–127 (GHL). Lys229 carries the N6-(pyridoxal phosphate)lysine modification. 355 to 357 (SPF) contributes to the (6S)-5,6,7,8-tetrahydrofolate binding site.

It belongs to the SHMT family. In terms of assembly, homodimer. Requires pyridoxal 5'-phosphate as cofactor.

Its subcellular location is the cytoplasm. It catalyses the reaction (6R)-5,10-methylene-5,6,7,8-tetrahydrofolate + glycine + H2O = (6S)-5,6,7,8-tetrahydrofolate + L-serine. The protein operates within one-carbon metabolism; tetrahydrofolate interconversion. Its pathway is amino-acid biosynthesis; glycine biosynthesis; glycine from L-serine: step 1/1. Functionally, catalyzes the reversible interconversion of serine and glycine with tetrahydrofolate (THF) serving as the one-carbon carrier. This reaction serves as the major source of one-carbon groups required for the biosynthesis of purines, thymidylate, methionine, and other important biomolecules. Also exhibits THF-independent aldolase activity toward beta-hydroxyamino acids, producing glycine and aldehydes, via a retro-aldol mechanism. This is Serine hydroxymethyltransferase from Stenotrophomonas maltophilia (strain R551-3).